The chain runs to 568 residues: Methionine--tRNA ligase (568 aa).

Residues 10-20 (PYVQSVPHLGN) carry the 'HIGH' region motif. Cys143, Cys146, Cys156, and Cys159 together coordinate Zn(2+). The 'KMSKS' region signature appears at 333-337 (KFSKS). Lys336 contributes to the ATP binding site.

The protein belongs to the class-I aminoacyl-tRNA synthetase family. MetG type 1 subfamily. Zn(2+) serves as cofactor.

The protein localises to the cytoplasm. It catalyses the reaction tRNA(Met) + L-methionine + ATP = L-methionyl-tRNA(Met) + AMP + diphosphate. In terms of biological role, is required not only for elongation of protein synthesis but also for the initiation of all mRNA translation through initiator tRNA(fMet) aminoacylation. The sequence is that of Methionine--tRNA ligase from Metallosphaera sedula (strain ATCC 51363 / DSM 5348 / JCM 9185 / NBRC 15509 / TH2).